The following is a 630-amino-acid chain: Pentatricopeptide repeat-containing protein At1g63130, mitochondrial (630 aa).

The N-terminal 22 residues, 1–22 (MRRLFAISSTGNRFVHRSLLGK), are a transit peptide targeting the mitochondrion. PPR repeat units lie at residues 80-114 (SIVEFSKLLSAIAKMNKFDLVISLGEQMQNLGISH), 115-149 (NLYTYSILINCFCRRSQLSLALAVLAKMMKLGYEP), 150-184 (DIVTLNSLLNGFCHGNRISDAVSLVGQMVEMGYQP), 185-219 (DSFTFNTLIHGLFRHNRASEAVALVDRMVVKGCQP), 220-254 (DLVTYGIVVNGLCKRGDIDLALSLLKKMEQGKIEP), 255-289 (GVVIYNTIIDALCNYKNVNDALNLFTEMDNKGIRP), 290-324 (NVVTYNSLIRCLCNYGRWSDASRLLSDMIERKINP), 325-359 (NVVTFSALIDAFVKEGKLVEAEKLYDEMIKRSIDP), 360-394 (DIFTYSSLINGFCMHDRLDEAKHMFELMISKDCFP), 395-429 (NVVTYNTLIKGFCKAKRVDEGMELFREMSQRGLVG), 430-464 (NTVTYTTLIHGFFQARECDNAQIVFKQMVSDGVLP), 465-499 (DIMTYSILLDGLCNNGKVETALVVFEYLQRSKMEP), 500-534 (DIYTYNIMIEGMCKAGKVEDGWDLFCSLSLKGVKP), 535-569 (NVVTYTTMMSGFCRKGLKEEADALFREMKEEGPLP), and 570-604 (DSGTYNTLIRAHLRDGDKAASAELIREMRSCRFVG).

The protein belongs to the PPR family. P subfamily.

The protein resides in the mitochondrion. The chain is Pentatricopeptide repeat-containing protein At1g63130, mitochondrial from Arabidopsis thaliana (Mouse-ear cress).